Reading from the N-terminus, the 139-residue chain is Translation initiation factor 2 subunit beta (139 aa).

The protein belongs to the eIF-2-beta/eIF-5 family. As to quaternary structure, heterotrimer composed of an alpha, a beta and a gamma chain.

In terms of biological role, eIF-2 functions in the early steps of protein synthesis by forming a ternary complex with GTP and initiator tRNA. The chain is Translation initiation factor 2 subunit beta from Nanoarchaeum equitans (strain Kin4-M).